A 121-amino-acid polypeptide reads, in one-letter code: Large ribosomal subunit protein bL20 (121 aa).

The protein belongs to the bacterial ribosomal protein bL20 family.

In terms of biological role, binds directly to 23S ribosomal RNA and is necessary for the in vitro assembly process of the 50S ribosomal subunit. It is not involved in the protein synthesizing functions of that subunit. In Polynucleobacter asymbioticus (strain DSM 18221 / CIP 109841 / QLW-P1DMWA-1) (Polynucleobacter necessarius subsp. asymbioticus), this protein is Large ribosomal subunit protein bL20.